A 201-amino-acid polypeptide reads, in one-letter code: L-rhamnose-binding lectin SML (201 aa).

Cystine bridges form between cysteine 10–cysteine 40, cysteine 20–cysteine 99, cysteine 54–cysteine 86, cysteine 67–cysteine 73, cysteine 108–cysteine 138, cysteine 117–cysteine 195, cysteine 152–cysteine 182, and cysteine 163–cysteine 169. SUEL-type lectin domains are found at residues 18 to 100 (LSCD…YNCF) and 107 to 196 (TCEH…YVCQ). Asparagine 168 carries an N-linked (GlcNAc...) asparagine glycan.

In terms of assembly, homodimer; non-covalently linked.

Functionally, rhamnose-binding lectin. Also binds melibiose, raffinose, D-galactose, L-arabinose, D-fucose, maltose and D-glucose with decreasing affinity. Does not bind D-arabinose, L-fucose, lactose, xylose or 2-deoxy-D-galactose. Shows strong hemagglutinating activity against rabbit erythrocytes. This Scomberomorus niphonius (Japanese Spanish mackerel) protein is L-rhamnose-binding lectin SML.